The following is a 499-amino-acid chain: Phenylalanine--tRNA ligase alpha subunit B (499 aa).

Residues Thr-330, 373–375, and Tyr-413 each bind L-phenylalanine; that span reads QIE. Glu-415 lines the Mg(2+) pocket. Phe-439 serves as a coordination point for L-phenylalanine.

It belongs to the class-II aminoacyl-tRNA synthetase family. Phe-tRNA synthetase alpha subunit type 2 subfamily. In terms of assembly, heterotetramer; dimer of two heterodimers formed by alpha and beta subunits. The cofactor is Mg(2+).

The protein localises to the cytoplasm. The catalysed reaction is tRNA(Phe) + L-phenylalanine + ATP = L-phenylalanyl-tRNA(Phe) + AMP + diphosphate + H(+). The protein is Phenylalanine--tRNA ligase alpha subunit B (farsa-b) of Xenopus laevis (African clawed frog).